Here is a 476-residue protein sequence, read N- to C-terminus: Raffinose invertase (476 aa).

Substrate is bound by residues 35–38, glutamine 54, 97–98, 159–160, glutamate 214, and tryptophan 297; these read WMND, FS, and RD. Residue aspartate 38 is part of the active site.

Belongs to the glycosyl hydrolase 32 family. In terms of assembly, homodimer.

It catalyses the reaction Hydrolysis of terminal non-reducing beta-D-fructofuranoside residues in beta-D-fructofuranosides.. In terms of biological role, may prevent the potential hasard of excessive sucrose accumulation. This chain is Raffinose invertase (rafD), found in Escherichia coli.